Consider the following 149-residue polypeptide: D-aminoacyl-tRNA deacylase (149 aa).

A Gly-cisPro motif, important for rejection of L-amino acids motif is present at residues 137-138 (GP).

It belongs to the DTD family. As to quaternary structure, homodimer.

It localises to the cytoplasm. It carries out the reaction glycyl-tRNA(Ala) + H2O = tRNA(Ala) + glycine + H(+). It catalyses the reaction a D-aminoacyl-tRNA + H2O = a tRNA + a D-alpha-amino acid + H(+). An aminoacyl-tRNA editing enzyme that deacylates mischarged D-aminoacyl-tRNAs. Also deacylates mischarged glycyl-tRNA(Ala), protecting cells against glycine mischarging by AlaRS. Acts via tRNA-based rather than protein-based catalysis; rejects L-amino acids rather than detecting D-amino acids in the active site. By recycling D-aminoacyl-tRNA to D-amino acids and free tRNA molecules, this enzyme counteracts the toxicity associated with the formation of D-aminoacyl-tRNA entities in vivo and helps enforce protein L-homochirality. This Fervidobacterium nodosum (strain ATCC 35602 / DSM 5306 / Rt17-B1) protein is D-aminoacyl-tRNA deacylase.